The following is a 573-amino-acid chain: Diflavin flavoprotein A 1 (573 aa).

Positions 43-236 (QNGTTYNSYL…GTISTVANGH (194 aa)) are zinc metallo-hydrolase. Residues His-92, Glu-94, Asp-96, His-159, Asp-178, and His-236 each coordinate Fe cation. The Flavodoxin-like domain occupies 265–401 (VVVFYVADYG…LCDESGTDLG (137 aa)). The tract at residues 424 to 573 (IGRISGGLYI…VHHRKVGNYY (150 aa)) is flavodoxin-reductase-like.

The protein in the N-terminal section; belongs to the zinc metallo-hydrolase group 3 family. In the C-terminal section; belongs to the flavodoxin reductase family. In terms of assembly, homodimer. Fe cation is required as a cofactor. It depends on FAD as a cofactor. The cofactor is FMN.

In terms of biological role, mediates electron transfer from NADH to oxygen, reducing it to water. This modular protein has 3 redox cofactors, in other organisms the same activity requires 2 or 3 proteins. In Synechocystis sp. (strain ATCC 27184 / PCC 6803 / Kazusa), this protein is Diflavin flavoprotein A 1 (dfa1).